A 254-amino-acid polypeptide reads, in one-letter code: Protein GltF (254 aa).

The N-terminal stretch at 1–25 (MFFKKNLTTAAICAALSVAAFSAMA) is a signal peptide. The helical transmembrane segment at 213–229 (PVAITAVTFPLLIDAAV) threads the bilayer.

This sequence to E.coli YhcF.

It localises to the cell membrane. Its function is as follows. Involved in induction of the so-called NTR enzymes in response to nitrogen deprivation, as well as in glutamate biosynthesis. May mediate the glutamate-dependent repression of the GLT operon. In Escherichia coli (strain K12), this protein is Protein GltF (gltF).